Here is a 501-residue protein sequence, read N- to C-terminus: MMITLFTLAVVSIGFFLWWLLTVQPAVTKRALKHIPELRFEDNDTPERYTQDSRSLLFRGYDKYLRHGIPFQMRHPIEELGPQVLLPMKYLDEVKYASTSLFSFPLFSEKVFLLNYSNAPRQTDAAAHVVRVDLTKNLGALANGMYQEAIEGLNQSLSASEEWNTLPAYDFLSSLTAQVTALALVGPELCRNREWIDISLQTTFAIFNAAFTIRSQYSPRWRWLARWQSDAPKRMRAMRARAVELLAPVYQDRLAAIKEHDFGAFADCLHWSLRGNGGETSLTRIAEQQLFLTVASMHTTSSTLTAVLFDLLIRPEYCAEITKEMQEALTECEGKWTLQEVAKMRKLDSFMKESQRVHPIGFITAQRMTVRPHTFKDGLHLPAGVIFQFPADAVHHDPAIYPRPDQFAGYRFLHLRETVDANRYHFASVSDTMLGFGAGSHACPGRFFTSLAIKLILVVLLTQYEVKLADCDGSRPANGFNDFNMGPSREATIMIRKRSGL.

An N-terminal signal peptide occupies residues 1 to 28; the sequence is MMITLFTLAVVSIGFFLWWLLTVQPAVT. 2 N-linked (GlcNAc...) asparagine glycosylation sites follow: Asn-115 and Asn-154. Position 443 (Cys-443) interacts with heme.

It belongs to the cytochrome P450 family. Heme is required as a cofactor.

It participates in mycotoxin biosynthesis. Functionally, cytochrome P450 monooxygenase; part of the gene cluster that mediates the biosynthesis of a family of the mycotoxins cytochalasins E and K. The hybrid PKS-NRPS synthetase ccsA and the enoyl reductase ccsC are responsible for fusion of phenylalanine with an octaketide backbone and subsequent release of the stable tetramic acid precursor. The polyketide synthase module (PKS) of the PKS-NRPS ccsA is responsible for the synthesis of the octaketide backbone. The downstream nonribosomal peptide synthetase (NRPS) amidates the carboxyl end of the octaketide with a phenylalanine. A reductase-like domain (R) at the C-terminus catalyzes the reductive release of the polyketide-amino acid intermediate. Because ccsA lacks a designated enoylreductase (ER) domain, the required activity is provided the enoyl reductase ccsC. Upon formation of the 11-membered carbocycle-fused perhydroisoindolone intermediate, a number of oxidative steps are required to afford the final cytochalasin E and K, including two hydroxylations at C17 and C18, one alcohol oxidation at C17, one epoxidation at C6 and C7 and two Baeyer-Villiger oxidations. The oxidative modification at C17, C18 and the C6-C7 epoxidation are likely to be catalyzed by the two cytochrome P450 oxygenases ccsD and ccsG. CcsD may be responsible for the epoxidation of the C6-C7 double bond. CcsG may be responsible for the successive oxidative modifications at C17 and C18. The double Baeyer-Villiger oxidations of ketocytochalasin to precytochalasin and cytochalasin Z(16) are among the final steps leading to cytochalasin E and K and are catalyzed by ccsB. The first oxygen insertion step follows that of the classic BVMO mechanism, generating the ester precytochalasin. Release of precytochalasin into an aqueous environment can generate the shunt product iso-precytochalasin through spontaneous isomerization. Alternatively, precytochalasin can undergo further oxidation by ccsB to yield the in-line carbonate-containing cytochalasin Z(16). Cytochalasin Z(16) is a precursor to cytochalasin E and cytochalasin K, whereas iso-precytochalasin is a precursor to cytochalasin Z(17) and rosellichalasin. The hydrolyase ccsE may catalyze hydrolysis of epoxide bond in cytochalasin E to afford cytochalasin K. The function of ccsF has not been assigned but it may play a role in post-PKS-NRPS biosynthetic step, resistance or transport of cytochalasins and related PKS-NRPS products. This is Cytochrome P450 monooxygenase ccsG from Aspergillus clavatus (strain ATCC 1007 / CBS 513.65 / DSM 816 / NCTC 3887 / NRRL 1 / QM 1276 / 107).